The following is a 270-amino-acid chain: Flavodoxin/ferredoxin--NADP reductase (270 aa).

The 102-residue stretch at 12–113 (VLPDAQTVTS…PKPVGTLVID (102 aa)) folds into the FAD-binding FR-type domain. Residues 62-65 (RAYS), 78-80 (YSI), and 86-88 (PLT) each bind FAD. Position 126 (Thr126) interacts with NADP(+). Thr128 contacts FAD. Residues Arg156, 192 to 193 (TR), Arg201, and Asp238 each bind NADP(+). 264 to 270 (AFVGEGI) is an FAD binding site.

Belongs to the ferredoxin--NADP reductase type 1 family. In terms of assembly, monomer. It depends on FAD as a cofactor.

Its subcellular location is the cytoplasm. The catalysed reaction is 2 reduced [2Fe-2S]-[ferredoxin] + NADP(+) + H(+) = 2 oxidized [2Fe-2S]-[ferredoxin] + NADPH. It carries out the reaction reduced [flavodoxin] + NADP(+) = oxidized [flavodoxin] + NADPH + 2 H(+). Its function is as follows. Transports electrons between flavodoxin or ferredoxin and NADPH. The chain is Flavodoxin/ferredoxin--NADP reductase from Rhodobacter capsulatus (Rhodopseudomonas capsulata).